The following is a 243-amino-acid chain: Orotidine 5'-phosphate decarboxylase (243 aa).

Substrate is bound by residues D19, K41, 69 to 78 (DLKFFDIPAT), T124, R185, Q194, G214, and R215. K71 acts as the Proton donor in catalysis.

The protein belongs to the OMP decarboxylase family. Type 1 subfamily. Homodimer.

It carries out the reaction orotidine 5'-phosphate + H(+) = UMP + CO2. It participates in pyrimidine metabolism; UMP biosynthesis via de novo pathway; UMP from orotate: step 2/2. Catalyzes the decarboxylation of orotidine 5'-monophosphate (OMP) to uridine 5'-monophosphate (UMP). This is Orotidine 5'-phosphate decarboxylase from Xanthomonas campestris pv. campestris (strain B100).